The sequence spans 124 residues: MNALGRHILAEIYGCDSNILDNLELIEDIMVQSAIVTGAEIREVAFHKFNPQGVSGVVVISESHITIHTWPELGYAAVDVFTCGDDVNPWDACNYIAKMLRAQNMTATEVKRGVFEKPVKVVNY.

Catalysis depends on S63, which acts as the Schiff-base intermediate with substrate; via pyruvic acid. Pyruvic acid (Ser); by autocatalysis is present on S63. The active-site Proton acceptor; for processing activity is H68. The active-site Proton donor; for catalytic activity is C83.

The protein belongs to the prokaryotic AdoMetDC family. Type 1 subfamily. As to quaternary structure, heterotetramer of two alpha and two beta chains arranged as a dimer of alpha/beta heterodimers. Pyruvate serves as cofactor. Is synthesized initially as an inactive proenzyme. Formation of the active enzyme involves a self-maturation process in which the active site pyruvoyl group is generated from an internal serine residue via an autocatalytic post-translational modification. Two non-identical subunits are generated from the proenzyme in this reaction, and the pyruvate is formed at the N-terminus of the alpha chain, which is derived from the carboxyl end of the proenzyme. The post-translation cleavage follows an unusual pathway, termed non-hydrolytic serinolysis, in which the side chain hydroxyl group of the serine supplies its oxygen atom to form the C-terminus of the beta chain, while the remainder of the serine residue undergoes an oxidative deamination to produce ammonia and the pyruvoyl group blocking the N-terminus of the alpha chain.

The catalysed reaction is S-adenosyl-L-methionine + H(+) = S-adenosyl 3-(methylsulfanyl)propylamine + CO2. It functions in the pathway amine and polyamine biosynthesis; S-adenosylmethioninamine biosynthesis; S-adenosylmethioninamine from S-adenosyl-L-methionine: step 1/1. In terms of biological role, catalyzes the decarboxylation of S-adenosylmethionine to S-adenosylmethioninamine (dcAdoMet), the propylamine donor required for the synthesis of the polyamines spermine and spermidine from the diamine putrescine. This chain is S-adenosylmethionine decarboxylase proenzyme, found in Thermoanaerobacter pseudethanolicus (strain ATCC 33223 / 39E) (Clostridium thermohydrosulfuricum).